The chain runs to 179 residues: Large ribosomal subunit protein uL6 (179 aa).

Belongs to the universal ribosomal protein uL6 family. As to quaternary structure, part of the 50S ribosomal subunit.

Its function is as follows. This protein binds to the 23S rRNA, and is important in its secondary structure. It is located near the subunit interface in the base of the L7/L12 stalk, and near the tRNA binding site of the peptidyltransferase center. The chain is Large ribosomal subunit protein uL6 from Gemmatimonas aurantiaca (strain DSM 14586 / JCM 11422 / NBRC 100505 / T-27).